We begin with the raw amino-acid sequence, 482 residues long: Histone deacetylase 1 (482 aa).

The segment at 9 to 321 is histone deacetylase; sequence RKVCYYYDGD…WTYETAVALD (313 aa). Gly-27 and Lys-31 together coordinate 1D-myo-inositol 1,4,5,6-tetrakisphosphate. N6-acetyllysine; alternate is present on Lys-74. Residue Lys-74 forms a Glycyl lysine isopeptide (Lys-Gly) (interchain with G-Cter in SUMO2); alternate linkage. The active site involves His-141. Zn(2+)-binding residues include Asp-176 and His-178. Position 220 is an N6-acetyllysine (Lys-220). Cys-261 is modified (S-nitrosocysteine). Asp-264 contributes to the Zn(2+) binding site. Residue Arg-270 coordinates 1D-myo-inositol 1,4,5,6-tetrakisphosphate. S-nitrosocysteine is present on Cys-273. The segment covering 390–400 has biased composition (acidic residues); that stretch reads PEESGDEDEDD. Positions 390-482 are disordered; it reads PEESGDEDED…KGVKEEVKLA (93 aa). Ser-393, Ser-406, and Ser-409 each carry phosphoserine. Over residues 401–416 the composition is skewed to basic and acidic residues; sequence PDKRISICSSDKRIAC. Acidic residues predominate over residues 417–427; sequence EEEFSDSEEEG. Phosphoserine; by CK2 is present on residues Ser-421 and Ser-423. The residue at position 432 (Lys-432) is an N6-methylated lysine; by EHMT2. Residue Lys-438 forms a Glycyl lysine isopeptide (Lys-Gly) (interchain with G-Cter in SUMO2) linkage. The span at 443 to 482 shows a compositional bias: basic and acidic residues; it reads VKTEDEKEKDPEEKKEVTEEEKTKEEKPEAKGVKEEVKLA. Lys-444 participates in a covalent cross-link: Glycyl lysine isopeptide (Lys-Gly) (interchain with G-Cter in SUMO2); alternate. Lys-444 is covalently cross-linked (Glycyl lysine isopeptide (Lys-Gly) (interchain with G-Cter in SUMO); alternate). Glycyl lysine isopeptide (Lys-Gly) (interchain with G-Cter in SUMO2) cross-links involve residues Lys-456, Lys-457, and Lys-473. A Glycyl lysine isopeptide (Lys-Gly) (interchain with G-Cter in SUMO2); alternate cross-link involves residue Lys-476. Lys-476 participates in a covalent cross-link: Glycyl lysine isopeptide (Lys-Gly) (interchain with G-Cter in SUMO); alternate. Lys-480 participates in a covalent cross-link: Glycyl lysine isopeptide (Lys-Gly) (interchain with G-Cter in SUMO2).

Belongs to the histone deacetylase family. HD type 1 subfamily. As to quaternary structure, part of the core histone deacetylase (HDAC) complex composed of HDAC1, HDAC2, RBBP4 and RBBP7, the core complex associates with SIN3, SAP18 and SAP30 to form the SIN3 HDAC complex. Component of the nucleosome remodeling and deacetylase (NuRD) repressor complex, composed of core proteins MTA1, MTA2, MTA3, RBBP4, RBBP7, HDAC1, HDAC2, MBD2, MBD3, and peripherally associated proteins CDK2AP1, CDK2AP2, GATAD2A, GATAD2B, CHD3, CHD4 and CHD5. The exact stoichiometry of the NuRD complex is unknown, and some subunits such as MBD2 and MBD3, GATAD2A and GATAD2B, and CHD3, CHD4 and CHD5 define mutually exclusive NuRD complexes. Component of a BHC histone deacetylase complex that contains HDAC1, HDAC2, HMG20B/BRAF35, KDM1A, RCOR1/CoREST and PHF21A/BHC80. The BHC complex may also contain ZMYM2, ZNF217, ZMYM3, GSE1 and GTF2I. Component of a mSin3A corepressor complex that contains SIN3A, SAP130, SUDS3/SAP45, ARID4B/SAP180, HDAC1 and HDAC2. Component of the SIN3B complex, which includes SIN3B, HDAC1, PHF12 and MORF4L1. Found in a trimeric complex with APBB1 and TSHZ3; the interaction between HDAC1 and APBB1 is mediated by TSHZ3. Forms a complex comprising APPL1, RUVBL2, APPL2, CTNNB1 and HDAC2. Component of a RCOR/GFI/KDM1A/HDAC complex. Part of a complex composed of TRIM28, HDAC1, HDAC2 and EHMT2. Part of a complex containing at least CDYL, MIER1, MIER2, HDAC1 and HDAC2. The large PER complex involved in the histone deacetylation is composed of at least HDAC1, PER2, SFPQ and SIN3A. Associates with the 9-1-1 complex; interacts with HUS1. Found in a complex with DNMT3A and HDAC7. Found in a complex with YY1, SIN3A and GON4L. Identified in a histone deacetylase complex that contains DNTTIP1, HDAC1 and MIDEAS; this complex assembles into a tetramer that contains four copies of each protein chain. Found in a complex composed of at least SINHCAF, SIN3A, HDAC1, SAP30, RBBP4, OGT and TET1. Interacts with GFI1; the interaction is direct. Interacts directly with GFI1B. Interacts with TSHZ3 (via N-terminus); the interaction is direct. Interacts with APEX1; the interaction is not dependent on the acetylated status of APEX1. Interacts with BANP. Interacts with BAZ2A/TIP5. Interacts with BCL6. Interacts with BCOR. Interacts with BHLHE40/DEC1. Interacts with BRCC3; this interaction is enhanced in the presence of PWWP2B. Interacts with BRMS1. Interacts with BRMS1L. Interacts with C10orf90/FATS (via its N-terminal); the interaction prevents binding of HDAC1 to CDKN1A/p21 and facilitates the acetylation and stabilization of CDKN1A/p21. Interacts with CBFA2T3. Interacts with CCAR2. Interacts with CDK2AP1. Interacts with CHD3. Interacts with CHD4. Interacts with CHFR. Interacts with CIART. Interacts with CDKN1A/p21. Interacts with CDK5 complexed to CDK5R1 (p25). Interacts with CRY1. Interacts with DAXX. Interacts with DDIT3/CHOP. Interacts with DDX5. Interacts with DHX36; this interaction occurs in a RNA-dependent manner. Interacts with DNMT1. Interacts with DNTTIP1. Interacts with E4F1. Interacts with EP300. Interacts with ERCC6. Interacts with GATAD2A. Interacts with HCFC1. Interacts with HDAC9. Interacts with HUS1. Interacts with INSM1. Interacts with KDM4A. Interacts with KDM5A; this interaction impairs histone deacetylation. Interacts with KDM5B. Interacts with KLF1. Interacts with MBD3L2. Interacts with MIER1. Interacts with NFE4. Interacts with NR4A2/NURR1. Interacts with NR1D2 (via C-terminus). Interacts with NRIP1. Interacts with NSD2. Interacts with PACS2. Interacts with PHB2. Interacts with PPHLN1. Interacts with PRDM6. Interacts with PRDM16. Interacts with PWWP2A in a MTA1-dependent manner. Interacts with PWWP2B. Interacts with RB1. Interacts with RERE. Interacts with SANBR (via the BTB domain). Interacts with SAMSN1. Interacts with SAP30L. Interacts with SETDB1. Interacts with SIN3A. Interacts with SMAD3. Interacts with SMAD4; positively regulated by ZBTB7A. Interacts with SMARCAD1. Interacts with SMARCA4/BRG1. Interacts with SMYD2. Interacts with SMYD4 (via MYND-type zinc finger). Interacts with SP1; the interaction deacetylates SP1 and regulates its transcriptional activity. Interacts with SP3; the interaction deacetylates SP3 and regulates its transcriptional activity. In vitro, C(18) ceramides increase this interaction and the subsequent SP3 deacetylation and SP3-mediated repression of the TERT promoter. Interacts with SPEN/MINT. Interacts with SPHK2. Interacts with SUV39H1. Interacts with TGIF. Interacts with TGIF2. Interacts with TRAF6. Interacts with TRIM28; the interaction recruits HDAC1 to E2F1 and inhibits its acetylation. Interacts with TSC22D3 isoform 1; this interaction affects HDAC1 activity on MYOG promoter and thus inhibits MYOD1 transcriptional activity. Interacts with UHRF1. Interacts with UHRF2. Interacts with ZBTB7A. Interacts with ZMYND8. Interacts with ZMYND15. Interacts with ZNF431. Interacts with ZNF516; this interaction is enhanced in the presence of PWWP2B. Interacts with ZNF541. Interacts with ZNF638. Interacts with ZNHIT1. Interacts with the non-histone region of MACROH2A1. Identified in a complex with HDAC2, KCTD19, DNTTIP1 and ZNF541. Interacts with VRK1. In terms of assembly, (Microbial infection) Interacts with SV40 large T antigen. The cofactor is Zn(2+). Post-translationally, sumoylated on Lys-444 and Lys-476; which promotes enzymatic activity. Desumoylated by SENP1. In terms of processing, phosphorylation on Ser-421 and Ser-423 promotes enzymatic activity and interactions with NuRD and SIN3 complexes. Phosphorylated by CDK5. Ubiquitinated by CHFR, leading to its degradation by the proteasome. Ubiquitinated by KCTD11, leading to proteasomal degradation. As to expression, ubiquitous, with higher levels in heart, pancreas and testis, and lower levels in kidney and brain.

Its subcellular location is the nucleus. It catalyses the reaction N(6)-acetyl-L-lysyl-[histone] + H2O = L-lysyl-[histone] + acetate. The catalysed reaction is N(6)-acetyl-L-lysyl-[protein] + H2O = L-lysyl-[protein] + acetate. It carries out the reaction N(6)-(2E)-butenoyl-L-lysyl-[protein] + H2O = (2E)-2-butenoate + L-lysyl-[protein]. The enzyme catalyses N(6)-[(S)-lactoyl]-L-lysyl-[protein] + H2O = (S)-lactate + L-lysyl-[protein]. Its activity is regulated as follows. Inositol tetraphosphate (1D-myo-inositol 1,4,5,6-tetrakisphosphate) may act as an intermolecular glue between HDAC1 and N-Cor repressor complex components. In terms of biological role, histone deacetylase that catalyzes the deacetylation of lysine residues on the N-terminal part of the core histones (H2A, H2B, H3 and H4). Histone deacetylation gives a tag for epigenetic repression and plays an important role in transcriptional regulation, cell cycle progression and developmental events. Histone deacetylases act via the formation of large multiprotein complexes. Acts as a component of the histone deacetylase NuRD complex which participates in the remodeling of chromatin. As part of the SIN3B complex is recruited downstream of the constitutively active genes transcriptional start sites through interaction with histones and mitigates histone acetylation and RNA polymerase II progression within transcribed regions contributing to the regulation of transcription. Also functions as a deacetylase for non-histone targets, such as NR1D2, RELA, SP1, SP3, STAT3 and TSHZ3. Deacetylates SP proteins, SP1 and SP3, and regulates their function. Component of the BRG1-RB1-HDAC1 complex, which negatively regulates the CREST-mediated transcription in resting neurons. Upon calcium stimulation, HDAC1 is released from the complex and CREBBP is recruited, which facilitates transcriptional activation. Deacetylates TSHZ3 and regulates its transcriptional repressor activity. Deacetylates 'Lys-310' in RELA and thereby inhibits the transcriptional activity of NF-kappa-B. Deacetylates NR1D2 and abrogates the effect of KAT5-mediated relieving of NR1D2 transcription repression activity. Component of a RCOR/GFI/KDM1A/HDAC complex that suppresses, via histone deacetylase (HDAC) recruitment, a number of genes implicated in multilineage blood cell development. Involved in CIART-mediated transcriptional repression of the circadian transcriptional activator: CLOCK-BMAL1 heterodimer. Required for the transcriptional repression of circadian target genes, such as PER1, mediated by the large PER complex or CRY1 through histone deacetylation. In addition to protein deacetylase activity, also has protein-lysine deacylase activity: acts as a protein decrotonylase and delactylase by mediating decrotonylation ((2E)-butenoyl) and delactylation (lactoyl) of histones, respectively. The polypeptide is Histone deacetylase 1 (Homo sapiens (Human)).